A 136-amino-acid chain; its full sequence is uncharacterized protein (136 aa).

This is an uncharacterized protein from Leptolyngbya boryana (Plectonema boryanum).